Consider the following 274-residue polypeptide: Probable eukaryotic translation initiation factor 3 subunit J (274 aa).

Disordered regions lie at residues 1–110 and 207–245; these read MDSW…KEAM and KEQQ…NVNS. A compositionally biased stretch (acidic residues) spans 38 to 47; that stretch reads DEEDEDEEEN. The span at 52-73 shows a compositional bias: low complexity; sequence QNDSHSVSQKSSSSSQNDQGSN. A compositionally biased stretch (basic and acidic residues) spans 82 to 110; sequence IQERNFEKAIKASEAAAKEESLESSKEAM. The segment covering 219–234 has biased composition (low complexity); that stretch reads AAAPAAKPVSTAAPSK.

Belongs to the eIF-3 subunit J family. Component of the eukaryotic translation initiation factor 3 (eIF-3) complex. The eIF-3 complex appears to include tif32/eif3a, SPAC25G10.08/eif3b, tif33/eif3c, SPBC4C3.07/eif3f, tif35/eif3g and sum1/eif3i. This set of common subunits may also associate exclusively with either moe1/eif3d and int6/eif3e, or with SPAC821.05/eif3h and SPAC1751.03/eif3m. The eIF-3 complex may also include SPAC3A12.13c/eif3j. Interacts with sad1.

The protein resides in the cytoplasm. In terms of biological role, component of the eukaryotic translation initiation factor 3 (eIF-3) complex, which is involved in protein synthesis of a specialized repertoire of mRNAs and, together with other initiation factors, stimulates binding of mRNA and methionyl-tRNAi to the 40S ribosome. The eIF-3 complex specifically targets and initiates translation of a subset of mRNAs involved in cell proliferation. This Schizosaccharomyces pombe (strain 972 / ATCC 24843) (Fission yeast) protein is Probable eukaryotic translation initiation factor 3 subunit J.